The chain runs to 170 residues: Cathelicidin antimicrobial peptide (170 aa).

Residues 1–30 (MKTQRDGPSLGRWSLVLLLLGLTMPLAVIA) form the signal peptide. The propeptide at 31-131 (RVLSYQEAVL…DISCDKDKRK (101 aa)) is cathelin-like domain (CLD). 2 cysteine pairs are disulfide-bonded: cysteine 86–cysteine 97 and cysteine 108–cysteine 125. An active core region spans residues 150–162 (LKNIGQRIKDFFG).

Belongs to the cathelicidin family. Monomer, homodimer or homotrimer (in vitro). Oligomerizes as tetra- or hexamer in solution (in vitro). Post-translationally, proteolytically cleaved by proteinase PRTN3 into antibacterial peptide LL-37. Proteolytically cleaved by cathepsin CTSG and neutrophil elastase ELANE. In terms of processing, resistant to proteolytic degradation in solution, and when bound to both zwitterionic (mimicking mammalian membranes) and negatively charged membranes (mimicking bacterial membranes). After secretion onto the skin surface, the CAMP gene product is processed by a serine protease-dependent mechanism into multiple novel antimicrobial peptides distinct from and shorter than cathelicidin LL-37. These peptides show enhanced antimicrobial action, acquiring the ability to kill skin pathogens such as S.aureus, E.coli and C.albicans. These peptides have lost the ability to stimulate CXCL8/IL8 release from keratinocytes. The peptides act synergistically, killing bacteria at lower concentrations when present together, and maintain activity at increased salt condition.

The protein resides in the secreted. The protein localises to the vesicle. Its function is as follows. Antimicrobial protein that is an integral component of the innate immune system. Binds to bacterial lipopolysaccharides (LPS). Acts via neutrophil N-formyl peptide receptors to enhance the release of CXCL2. Postsecretory processing generates multiple cathelicidin antimicrobial peptides with various lengths which act as a topical antimicrobial defense in sweat on skin. The unprocessed precursor form, cathelicidin antimicrobial peptide, inhibits the growth of Gram-negative E.coli and E.aerogenes with efficiencies comparable to that of the mature peptide LL-37 (in vitro). In terms of biological role, antimicrobial peptide that is an integral component of the innate immune system. Binds to bacterial lipopolysaccharides (LPS). Causes membrane permeabilization by forming transmembrane pores (in vitro). Causes lysis of E.coli. Exhibits antimicrobial activity against Gram-negative bacteria such as P.aeruginosa, S.typhimurium, E.aerogenes, E.coli and P.syringae, Gram-positive bacteria such as L.monocytogenes, S.epidermidis, S.pyogenes and S.aureus, as well as vancomycin-resistant enterococci (in vitro). Exhibits antimicrobial activity against methicillin-resistant S.aureus, P.mirabilis, and C.albicans in low-salt media, but not in media containing 100 mM NaCl (in vitro). Forms chiral supramolecular assemblies with quinolone signal (PQS) molecules of P.aeruginosa, which may lead to interference of bacterial quorum signaling and perturbance of bacterial biofilm formation. May form supramolecular fiber-like assemblies on bacterial membranes. Induces cytokine and chemokine producation as well as TNF/TNFA and CSF2/GMCSF production in normal human keratinocytes. Exhibits hemolytic activity against red blood cells. Exhibits antimicrobial activity against E.coli and B.megaterium (in vitro). This is Cathelicidin antimicrobial peptide from Ateles fusciceps robustus (Colombian black-faced spider monkey).